A 113-amino-acid polypeptide reads, in one-letter code: Putative pterin-4-alpha-carbinolamine dehydratase (113 aa).

It belongs to the pterin-4-alpha-carbinolamine dehydratase family.

It carries out the reaction (4aS,6R)-4a-hydroxy-L-erythro-5,6,7,8-tetrahydrobiopterin = (6R)-L-erythro-6,7-dihydrobiopterin + H2O. The polypeptide is Putative pterin-4-alpha-carbinolamine dehydratase (Nitrosomonas eutropha (strain DSM 101675 / C91 / Nm57)).